Reading from the N-terminus, the 172-residue chain is S-ribosylhomocysteine lyase (172 aa).

Residues His-54, His-58, and Cys-128 each coordinate Fe cation.

The protein belongs to the LuxS family. In terms of assembly, homodimer. Fe cation serves as cofactor.

It carries out the reaction S-(5-deoxy-D-ribos-5-yl)-L-homocysteine = (S)-4,5-dihydroxypentane-2,3-dione + L-homocysteine. In terms of biological role, involved in the synthesis of autoinducer 2 (AI-2) which is secreted by bacteria and is used to communicate both the cell density and the metabolic potential of the environment. The regulation of gene expression in response to changes in cell density is called quorum sensing. Catalyzes the transformation of S-ribosylhomocysteine (RHC) to homocysteine (HC) and 4,5-dihydroxy-2,3-pentadione (DPD). In Vibrio vulnificus (strain CMCP6), this protein is S-ribosylhomocysteine lyase.